The following is a 104-amino-acid chain: Glycine-rich protein (104 aa).

Positions 1 to 18 (MKSMIAAILFALVATSLA) are cleaved as a signal peptide.

The protein belongs to the non-disulfide-bridged peptide (NDBP) superfamily. As to expression, expressed by the venom gland.

The protein resides in the secreted. This chain is Glycine-rich protein, found in Lychas mucronatus (Chinese swimming scorpion).